Here is a 295-residue protein sequence, read N- to C-terminus: Protein FAM221A (295 aa).

The segment at 244–295 (SEPPGIDKQVSSMRLSEEDDMAYFERRYQERLRKEKEHKRQKNSKPPTTQRP) is disordered. Over residues 266–278 (YFERRYQERLRKE) the composition is skewed to basic and acidic residues.

The protein belongs to the FAM221 family.

The polypeptide is Protein FAM221A (fam221a) (Xenopus laevis (African clawed frog)).